The following is a 1744-amino-acid chain: DNA-directed RNA polymerase I subunit RPA1 (1744 aa).

Zn(2+) contacts are provided by Cys-56, Cys-69, and His-72. Asp-597, Asp-599, and Asp-601 together coordinate Mg(2+). The segment at 953 to 965 is bridging helix; that stretch reads PAEYTIHAMAGRD. Residues 1333-1484 form a disordered region; the sequence is VPREKESGDG…RDGTDWGGTS (152 aa). Composition is skewed to gly residues over residues 1341-1354 and 1366-1376; these read DGSG…GGSG and DDGGGPLGGTF. A compositionally biased stretch (basic and acidic residues) spans 1464–1478; the sequence is RDAEDGGEMQDRDGT.

Belongs to the RNA polymerase beta' chain family. As to quaternary structure, component of the RNA polymerase I (Pol I) complex consisting of at least 13 subunits. Post-translationally, phosphorylated.

Its subcellular location is the nucleus. The protein resides in the nucleolus. The catalysed reaction is RNA(n) + a ribonucleoside 5'-triphosphate = RNA(n+1) + diphosphate. Its function is as follows. DNA-dependent RNA polymerase catalyzes the transcription of DNA into RNA using the four ribonucleoside triphosphates as substrates. Largest and catalytic core component of RNA polymerase I which synthesizes ribosomal RNA precursors. Forms the polymerase active center together with the second largest subunit. A single stranded DNA template strand of the promoter is positioned within the central active site cleft of Pol I. A bridging helix emanates from RPA1 and crosses the cleft near the catalytic site and is thought to promote translocation of Pol I by acting as a ratchet that moves the RNA-DNA hybrid through the active site by switching from straight to bent conformations at each step of nucleotide addition. The sequence is that of DNA-directed RNA polymerase I subunit RPA1 (TRP11) from Trypanosoma brucei brucei.